The following is an 807-amino-acid chain: Oxysterol-binding protein 1 (807 aa).

Alanine 2 carries the N-acetylalanine modification. The segment at 61–86 (GAGGVAAAGPAPAPPTGGSGGSGAGG) is disordered. Positions 77 to 86 (GGSGGSGAGG) are enriched in gly residues. Residues 88-181 (GSAREGWLFK…WVTALELAKA (94 aa)) enclose the PH domain. 117–122 (LSYYRS) contacts a 1,2-diacyl-sn-glycero-3-phospho-(1D-myo-inositol 4-phosphate). 5 positions are modified to phosphoserine: serine 190, serine 193, serine 198, serine 238, and serine 240. The stretch at 291 to 326 (QKSLQYERDQRIRLEETLEQLAKQHNHLERAFRGAT) forms a coiled coil. Position 314 (glutamine 314) interacts with 20-hydroxycholesterol. Residue glutamine 314 participates in 25-hydroxycholesterol binding. 7beta-hydroxycholesterol is bound at residue glutamine 314. Cholesterol is bound at residue glutamine 314. Glutamine 314 contributes to the ergosterol binding site. Residues 329 to 353 (PANTPGNVGSGKDQCCSGKGDMSDE) form a disordered region. 3 positions are modified to phosphoserine: serine 338, serine 345, and serine 351. Positions 358–364 (EFFDAPE) match the FFAT motif. Position 377 is a phosphothreonine (threonine 377). Serine 379, serine 382, serine 385, serine 386, and serine 389 each carry phosphoserine. Residues 493–496 (KPFN) and 522–523 (HH) contribute to the a 1,2-diacyl-sn-glycero-3-phospho-(1D-myo-inositol 4-phosphate) site. Positions 710-759 (TAPTDSRLRPDQRLMENGRWDEANAEKQRLEEKQRLSRKKREAEAMKATE) are disordered. Residues 715-759 (SRLRPDQRLMENGRWDEANAEKQRLEEKQRLSRKKREAEAMKATE) show a composition bias toward basic and acidic residues. Positions 730–760 (DEANAEKQRLEEKQRLSRKKREAEAMKATED) form a coiled coil.

Belongs to the OSBP family. As to quaternary structure, homodimer or homotrimer. Interacts (via FFAT motif) with VAPA. Interacts (via C-terminus) with RELCH (via the third HEAT repeat). Found in a complex composed of RELCH, OSBP1 and RAB11A. As to expression, widely expressed.

Its subcellular location is the cytoplasm. It is found in the cytosol. The protein resides in the perinuclear region. It localises to the golgi apparatus membrane. The protein localises to the endoplasmic reticulum membrane. Its subcellular location is the golgi apparatus. It is found in the trans-Golgi network. Its function is as follows. Lipid transporter involved in lipid countertransport between the Golgi complex and membranes of the endoplasmic reticulum: specifically exchanges sterol with phosphatidylinositol 4-phosphate (PI4P), delivering sterol to the Golgi in exchange for PI4P, which is degraded by the SAC1/SACM1L phosphatase in the endoplasmic reticulum. Binds cholesterol and a range of oxysterols including 25-hydroxycholesterol. Cholesterol binding promotes the formation of a complex with PP2A and a tyrosine phosphatase which dephosphorylates ERK1/2, whereas 25-hydroxycholesterol causes its disassembly. Regulates cholesterol efflux by decreasing ABCA1 stability. In Homo sapiens (Human), this protein is Oxysterol-binding protein 1.